The primary structure comprises 175 residues: uncharacterized protein (175 aa).

Positions 107–138 form a coiled coil; the sequence is KTEEEAEKTLQEIERKIFKKLWENLDKERKRE.

This is an uncharacterized protein from Aquifex aeolicus (strain VF5).